A 348-amino-acid chain; its full sequence is GTP 3',8-cyclase (348 aa).

In terms of domain architecture, Radical SAM core spans 24 to 242 (PFGRAVTYLR…EKQFTLTDID (219 aa)). A GTP-binding site is contributed by Arg-33. 2 residues coordinate [4Fe-4S] cluster: Cys-40 and Cys-44. Residue Tyr-46 participates in S-adenosyl-L-methionine binding. Cys-47 is a binding site for [4Fe-4S] cluster. Residue Arg-82 coordinates GTP. Gly-86 lines the S-adenosyl-L-methionine pocket. Thr-115 contacts GTP. Ser-139 contributes to the S-adenosyl-L-methionine binding site. Lys-175 contacts GTP. S-adenosyl-L-methionine is bound at residue Met-209. [4Fe-4S] cluster is bound by residues Cys-272 and Cys-275. A GTP-binding site is contributed by 277–279 (RVR). Cys-289 provides a ligand contact to [4Fe-4S] cluster.

This sequence belongs to the radical SAM superfamily. MoaA family. In terms of assembly, monomer and homodimer. [4Fe-4S] cluster is required as a cofactor.

It carries out the reaction GTP + AH2 + S-adenosyl-L-methionine = (8S)-3',8-cyclo-7,8-dihydroguanosine 5'-triphosphate + 5'-deoxyadenosine + L-methionine + A + H(+). Its pathway is cofactor biosynthesis; molybdopterin biosynthesis. In terms of biological role, catalyzes the cyclization of GTP to (8S)-3',8-cyclo-7,8-dihydroguanosine 5'-triphosphate. This chain is GTP 3',8-cyclase, found in Rhizobium leguminosarum bv. trifolii (strain WSM2304).